The following is a 250-amino-acid chain: Tetrahydromethanopterin S-methyltransferase subunit D (250 aa).

A run of 6 helical transmembrane segments spans residues 9-29 (IIWMALITIGGVLISWSVHFV), 47-67 (GTVQLAAGAGLTGLVSAGFMM), 86-106 (IMIAVTMIVGSIVYVYGVGVV), 144-164 (IIGGGLGGIGGSLVYYSLIEV), 184-204 (LVAVAAIFAIGIFFVNAVIPS), and 230-250 (LVASIMCAIVAVVAIAQLGGI).

This sequence belongs to the MtrD family. The complex is composed of 8 subunits; MtrA, MtrB, MtrC, MtrD, MtrE, MtrF, MtrG and MtrH.

Its subcellular location is the cell membrane. It catalyses the reaction 5-methyl-5,6,7,8-tetrahydromethanopterin + coenzyme M + 2 Na(+)(in) = 5,6,7,8-tetrahydromethanopterin + methyl-coenzyme M + 2 Na(+)(out). It functions in the pathway one-carbon metabolism; methanogenesis from CO(2); methyl-coenzyme M from 5,10-methylene-5,6,7,8-tetrahydromethanopterin: step 2/2. Functionally, part of a complex that catalyzes the formation of methyl-coenzyme M and tetrahydromethanopterin from coenzyme M and methyl-tetrahydromethanopterin. This is an energy-conserving, sodium-ion translocating step. The chain is Tetrahydromethanopterin S-methyltransferase subunit D from Methanosarcina barkeri (strain Fusaro / DSM 804).